The chain runs to 260 residues: Thiamine thiazole synthase (260 aa).

Residues alanine 36, 55 to 56 (EQ), glycine 63, and 154 to 156 (HVD) each bind NAD(+). 2 residues coordinate Fe cation: aspartate 156 and histidine 171. Residue methionine 224 coordinates NAD(+). Arginine 234 is a glycine binding site.

It belongs to the THI4 family. In terms of assembly, homooctamer; tetramer of dimers. Fe(2+) serves as cofactor.

It catalyses the reaction hydrogen sulfide + glycine + NAD(+) = ADP-5-ethyl-4-methylthiazole-2-carboxylate + nicotinamide + 3 H2O + H(+). Its pathway is cofactor biosynthesis; thiamine diphosphate biosynthesis. Its function is as follows. Involved in the biosynthesis of the thiazole moiety of thiamine. Catalyzes the conversion of NAD and glycine to adenosine diphosphate 5-(2-hydroxyethyl)-4-methylthiazole-2-carboxylate (ADT), an adenylated thiazole intermediate, using free sulfide as a source of sulfur. The polypeptide is Thiamine thiazole synthase (Methanosarcina barkeri (strain Fusaro / DSM 804)).